The chain runs to 226 residues: Transmembrane protein 98 (226 aa).

At 1-3 (MET) the chain is on the cytoplasmic side. The tract at residues 1 to 88 (METVVIVAIG…ENEDWIEDAS (88 aa)) is required for interaction with MYRF. Residues 4–24 (VVIVAIGVLATIFLASFAALV) form a helical membrane-spanning segment. The Extracellular portion of the chain corresponds to 25–226 (VVCRQRYCRP…EGFLQEQSAI (202 aa)). A disordered region spans residues 207–226 (SEPDKSLPNPEGFLQEQSAI).

The protein belongs to the TMEM98 family. As to quaternary structure, interacts (via N-terminal region) with MYRF; the interaction inhibits MYRF self-cleavage. As to expression, expressed in differentiated oligodendrocytes in early postanatal central nervous system tissues. Expressed by CD4(+) T cells, the expression increases upon activation (at protein level).

The protein localises to the endoplasmic reticulum membrane. It localises to the cell membrane. Its subcellular location is the secreted. It is found in the extracellular exosome. In terms of biological role, functions as a negative regulator of MYRF in oligodendrocyte differentiation and myelination. Interacts with the C-terminal of MYRF inhibiting MYRF self-cleavage and N-fragment nuclear translocation. The secreted form promotes differentiation of T helper 1 cells (Th1). The protein is Transmembrane protein 98 (Tmem98) of Mus musculus (Mouse).